The primary structure comprises 223 residues: V-type ATP synthase subunit D (223 aa).

The disordered stretch occupies residues 203–223; that stretch reads AREAEEEGGRPNPQVEIGAGL.

It belongs to the V-ATPase D subunit family.

Functionally, produces ATP from ADP in the presence of a proton gradient across the membrane. The protein is V-type ATP synthase subunit D of Thermus thermophilus (strain ATCC BAA-163 / DSM 7039 / HB27).